We begin with the raw amino-acid sequence, 357 residues long: Thiamine thiazole synthase 1, chloroplastic (357 aa).

A chloroplast-targeting transit peptide spans 1 to 51 (MSISAAGVATGLGANVELKSNVGSSSSSVAGVRLFTSRKAQLRRCAAPATS). Substrate-binding positions include alanine 103, 123-124 (EQ), glycine 131, and alanine 196. At cysteine 225 the chain carries 2,3-didehydroalanine (Cys). Substrate contacts are provided by residues aspartate 227, histidine 242, methionine 294, and 304–306 (RMG).

It belongs to the THI4 family. Homooctamer. Fe cation is required as a cofactor. In terms of processing, during the catalytic reaction, a sulfide is transferred from Cys-225 to a reaction intermediate, generating a dehydroalanine residue.

The protein localises to the plastid. Its subcellular location is the chloroplast. It catalyses the reaction [ADP-thiazole synthase]-L-cysteine + glycine + NAD(+) = [ADP-thiazole synthase]-dehydroalanine + ADP-5-ethyl-4-methylthiazole-2-carboxylate + nicotinamide + 3 H2O + 2 H(+). Involved in biosynthesis of the thiamine precursor thiazole. Catalyzes the conversion of NAD and glycine to adenosine diphosphate 5-(2-hydroxyethyl)-4-methylthiazole-2-carboxylic acid (ADT), an adenylated thiazole intermediate. The reaction includes an iron-dependent sulfide transfer from a conserved cysteine residue of the protein to a thiazole intermediate. The enzyme can only undergo a single turnover, which suggests it is a suicide enzyme. May have additional roles in adaptation to various stress conditions and in DNA damage tolerance. This Physcomitrium patens (Spreading-leaved earth moss) protein is Thiamine thiazole synthase 1, chloroplastic.